We begin with the raw amino-acid sequence, 689 residues long: Pyocin-S2 (689 aa).

Residues His-656, His-681, and His-685 each coordinate Zn(2+).

This sequence belongs to the colicin/pyosin nuclease family. Purified pyocin S2 makes up a complex of the two (large and small) proteins. The large protein, but not the pyocin complex, shows in vitro DNase activity.

Causes breakdown of chromosomal DNA as well as complete inhibition of lipid synthesis in sensitive cells. This Pseudomonas aeruginosa (strain ATCC 15692 / DSM 22644 / CIP 104116 / JCM 14847 / LMG 12228 / 1C / PRS 101 / PAO1) protein is Pyocin-S2 (pys2).